A 284-amino-acid polypeptide reads, in one-letter code: Ermin (284 aa).

Residues 1–23 (MTDVPATFTQAECNGDKPPENGQ) form a disordered region. At S73 the chain carries Phosphoserine. The interval 110-251 (REGHQWEKIP…PTLGKKSDIS (142 aa)) is disordered. Composition is skewed to basic and acidic residues over residues 126-140 (EIRR…QPLK) and 171-183 (LHSK…KVWD). Acidic residues predominate over residues 184–200 (EEIDDDDDDNCNNDEDE). Residues 201-220 (VRVIEFKKKHEEVSQFKEEG) are compositionally biased toward basic and acidic residues. S214, S226, S230, and S233 each carry phosphoserine. A compositionally biased stretch (low complexity) spans 225–235 (DSPLSSASSQA). T237 carries the post-translational modification Phosphothreonine. The segment at 265-284 (KIRKGNTKQRIDEFESMMHL) is binds actin.

Binds actin. Highly expressed in adult and fetal brain. Expressed at intermediate levels in the lung and liver.

It localises to the cytoplasm. It is found in the cytoskeleton. Plays a role in cytoskeletal rearrangements during the late wrapping and/or compaction phases of myelinogenesis as well as in maintenance and stability of myelin sheath in the adult. May play an important role in late-stage oligodendroglia maturation, myelin/Ranvier node formation during CNS development, and in the maintenance and plasticity of related structures in the mature CNS. The protein is Ermin (ERMN) of Homo sapiens (Human).